A 491-amino-acid chain; its full sequence is UDP-N-acetylmuramate--L-alanine ligase (491 aa).

126 to 132 (GTHGKTT) provides a ligand contact to ATP.

This sequence belongs to the MurCDEF family.

It localises to the cytoplasm. The catalysed reaction is UDP-N-acetyl-alpha-D-muramate + L-alanine + ATP = UDP-N-acetyl-alpha-D-muramoyl-L-alanine + ADP + phosphate + H(+). It functions in the pathway cell wall biogenesis; peptidoglycan biosynthesis. Cell wall formation. The polypeptide is UDP-N-acetylmuramate--L-alanine ligase (Salmonella paratyphi C (strain RKS4594)).